Here is a 437-residue protein sequence, read N- to C-terminus: Mitochondrial distribution and morphology protein 12 (437 aa).

Residues 1–437 (MSIDINWRTA…VYPSFWTFLI (437 aa)) enclose the SMP-LTD domain. Residues 73-85 (DDDADTSDVSEDL) are compositionally biased toward acidic residues. 3 disordered regions span residues 73–101 (DDDA…SELN), 187–274 (SDSG…PPRM), and 354–384 (SEQQ…RQGG). Residues 91 to 101 (SQWDRTHSELN) are compositionally biased toward basic and acidic residues. 2 stretches are compositionally biased toward polar residues: residues 215-240 (DTSN…NNLN) and 371-381 (ADSSAHTSQKR).

It belongs to the MDM12 family. In terms of assembly, component of the ER-mitochondria encounter structure (ERMES) or MDM complex, composed of mmm1, mdm10, mdm12 and mdm34. A mmm1 homodimer associates with one molecule of mdm12 on each side in a pairwise head-to-tail manner, and the SMP-LTD domains of mmm1 and mdm12 generate a continuous hydrophobic tunnel for phospholipid trafficking.

It is found in the mitochondrion outer membrane. It localises to the endoplasmic reticulum membrane. Functionally, component of the ERMES/MDM complex, which serves as a molecular tether to connect the endoplasmic reticulum (ER) and mitochondria. Components of this complex are involved in the control of mitochondrial shape and protein biogenesis, and function in nonvesicular lipid trafficking between the ER and mitochondria. Mdm12 is required for the interaction of the ER-resident membrane protein mmm1 and the outer mitochondrial membrane-resident beta-barrel protein mdm10. The mdm12-mmm1 subcomplex functions in the major beta-barrel assembly pathway that is responsible for biogenesis of all mitochondrial outer membrane beta-barrel proteins, and acts in a late step after the SAM complex. The mdm10-mdm12-mmm1 subcomplex further acts in the TOM40-specific pathway after the action of the mdm12-mmm1 complex. Essential for establishing and maintaining the structure of mitochondria and maintenance of mtDNA nucleoids. The sequence is that of Mitochondrial distribution and morphology protein 12 from Aspergillus clavatus (strain ATCC 1007 / CBS 513.65 / DSM 816 / NCTC 3887 / NRRL 1 / QM 1276 / 107).